Consider the following 414-residue polypeptide: Phosphoglycerate kinase (414 aa).

Substrate contacts are provided by residues aspartate 19–asparagine 21, arginine 34, histidine 57–lysine 60, arginine 114, and arginine 154. ATP contacts are provided by residues glutamate 332 and glycine 358 to serine 361.

Belongs to the phosphoglycerate kinase family. Monomer.

Its subcellular location is the cytoplasm. The enzyme catalyses (2R)-3-phosphoglycerate + ATP = (2R)-3-phospho-glyceroyl phosphate + ADP. Its pathway is carbohydrate degradation; glycolysis; pyruvate from D-glyceraldehyde 3-phosphate: step 2/5. In Thermococcus onnurineus (strain NA1), this protein is Phosphoglycerate kinase.